A 188-amino-acid polypeptide reads, in one-letter code: Elongation factor P (188 aa).

The protein belongs to the elongation factor P family.

It is found in the cytoplasm. It functions in the pathway protein biosynthesis; polypeptide chain elongation. Involved in peptide bond synthesis. Stimulates efficient translation and peptide-bond synthesis on native or reconstituted 70S ribosomes in vitro. Probably functions indirectly by altering the affinity of the ribosome for aminoacyl-tRNA, thus increasing their reactivity as acceptors for peptidyl transferase. The polypeptide is Elongation factor P (Nitrobacter winogradskyi (strain ATCC 25391 / DSM 10237 / CIP 104748 / NCIMB 11846 / Nb-255)).